A 329-amino-acid polypeptide reads, in one-letter code: DNA-directed RNA polymerase subunit alpha (329 aa).

Residues 1–235 (MQGSVTEFLK…EQLDAFVDLR (235 aa)) are alpha N-terminal domain (alpha-NTD). The interval 249 to 329 (FDPILLRPVD…NWPPASIAED (81 aa)) is alpha C-terminal domain (alpha-CTD).

This sequence belongs to the RNA polymerase alpha chain family. As to quaternary structure, homodimer. The RNAP catalytic core consists of 2 alpha, 1 beta, 1 beta' and 1 omega subunit. When a sigma factor is associated with the core the holoenzyme is formed, which can initiate transcription.

It catalyses the reaction RNA(n) + a ribonucleoside 5'-triphosphate = RNA(n+1) + diphosphate. In terms of biological role, DNA-dependent RNA polymerase catalyzes the transcription of DNA into RNA using the four ribonucleoside triphosphates as substrates. This Mannheimia succiniciproducens (strain KCTC 0769BP / MBEL55E) protein is DNA-directed RNA polymerase subunit alpha.